Here is an 885-residue protein sequence, read N- to C-terminus: MSDSPVELPSRLAVLPFRNKVLLPGAIVRIRCTNPSSVKLVEQELWQKEEKGLIGVLPVRDSEATAVGSLLSPGVGSDSGEGGSKVGGSAVESSKQDTKNGKEPIHWHSKGVAARALHLSRGVEKPSGRVTYIVVLEGLCRFSVQELSARGPYHVARVSRLDMTKTELEQAEQDPDLIALSRQFKATAMELISVLEQKQKTVGRTKVLLDTVPVYRLADIFVASFEISFEEQLSMLDSVHLKVRLSKATELVDRHLQSILVAEKITQKVEGQLSKSQKEFLLRQQMRAIKEELGDNDDDEDDVAALERKMQNAGMPANIWKHAQREMRRLRKMQPQQPGYSSSRAYLELLADLPWQKVSEERELDLRVAKESLDQDHYGLTKVKQRIIEYLAVRKLKPDARGPVLCFVGPPGVGKTSLASSIAKALNRKFIRISLGGVKDEADIRGHRRTYIGSMPGRLIDGLKRVSVSNPVMLLDEIDKTGSDVRGDPASALLEVLDPEQNKAFNDHYLNVPFDLSKVIFVATANRMQPIPPPLLDRMEIIELPGYTPEEKLKIAMKHLIPRVLEQHGLSTTNLQIPEAMVKLVIERYTREAGVRNLERNLAALARAAAVKVAEQVKTLRLGKEIQPITTTLLDSRLADGGEVEMEVIPMEHDISNTYENPSPMIVDEAMLEKVLGPPRFDDREAADRVASPGVSVGLVWTSVGGEVQFVEATAMVGKGDLHLTGQLGDVIKESAQLALTWVRARAADLNLSPTSDINLLESRDIHIHFPAGAVPKDGPSAGVTLVTALVSLFSNRKVRADTAMTGEMTLRGLVLPVGGVKDKVLAAHRYGIKRVILPERNLKDLSEVPLPILSDMEILLVKRIEEVLDHAFEGRCPLRSRSKL.

A Lon N-terminal domain is found at 12 to 256 (LAVLPFRNKV…KATELVDRHL (245 aa)). The disordered stretch occupies residues 70 to 104 (LLSPGVGSDSGEGGSKVGGSAVESSKQDTKNGKEP). A compositionally biased stretch (gly residues) spans 77–86 (SDSGEGGSKV). Residues 94 to 104 (SKQDTKNGKEP) are compositionally biased toward basic and acidic residues. An ATP-binding site is contributed by 409–416 (GPPGVGKT). The Lon proteolytic domain maps to 690–875 (VASPGVSVGL…EEVLDHAFEG (186 aa)). Active-site residues include Ser781 and Lys824. The short motif at 883–885 (SKL) is the Microbody targeting signal element.

The protein belongs to the peptidase S16 family.

It is found in the peroxisome matrix. It carries out the reaction Hydrolysis of proteins in presence of ATP.. Functionally, ATP-dependent serine protease that mediates the selective degradation of misfolded and unassembled polypeptides in the peroxisomal matrix. Necessary for type 2 peroxisome targeting signal (PTS2)-containing protein processing and facilitates peroxisome matrix protein import. The sequence is that of Lon protease homolog 2, peroxisomal (LON1) from Zea mays (Maize).